Reading from the N-terminus, the 478-residue chain is Solute carrier family 49 member 4 (478 aa).

Positions 1 to 27 (MGSGWSSEEEERQPLLGPGLGPAPGAA) are disordered. Residues 1-51 (MGSGWSSEEEERQPLLGPGLGPAPGAARRGREATAVLPAAGPNPGRVYGRR) are Cytoplasmic-facing. Positions 15-16 (LL) match the Di-leucine motif; mediates lysosomal localization motif. The helical transmembrane segment at 52–72 (WLVLLLFSLLAFAQGLVWNTW) threads the bilayer. At 73-89 (GPIQNSARQAYGFSGWD) the chain is on the lumenal side. Residues 90-110 (IALLVLWGPIGFLPCFAFMWL) form a helical membrane-spanning segment. Over 111–117 (LDKRGLR) the chain is Cytoplasmic. Residues 118-138 (VTVLLTSFLMVLGTGLRCIPV) form a helical membrane-spanning segment. Topologically, residues 139 to 152 (SDLALKKRLIHGGQ) are lumenal. Residues 153–173 (ILNGLAGPTVMNAAPFLSTTW) form a helical membrane-spanning segment. Residues 174–184 (FSADERATATA) are Cytoplasmic-facing. A helical membrane pass occupies residues 185 to 205 (IASMLSYLGGACAFLVGPLVV). Residues 206-229 (PAPNGTAPLLAAESSRAHIKDRIE) lie on the Lumenal side of the membrane. Residue N209 is glycosylated (N-linked (GlcNAc...) asparagine). The chain crosses the membrane as a helical span at residues 230–250 (TVLYAEFGVVCLIFSATLAYF). Topologically, residues 251–281 (PPRPPLPPSVAAASQRLSYRRSFCRLLSNLR) are cytoplasmic. The chain crosses the membrane as a helical span at residues 282–302 (FLMIALAYAIPLGVFAGWSGV). At 303–314 (LDLILTPVHVSQ) the chain is on the lumenal side. Residues 315 to 335 (VDAGWIGFWSIVGGCVVGIAM) form a helical membrane-spanning segment. The Cytoplasmic portion of the chain corresponds to 336–347 (ARFADFIRGMLK). A helical transmembrane segment spans residues 348–368 (LILLLLFSGATLSSTWFTLTC). At 369–384 (LNSITHLPLTTVTLYA) the chain is on the lumenal side. Residues 385 to 405 (SCILLGVFLNSSVPIFFELFV) traverse the membrane as a helical segment. The Cytoplasmic segment spans residues 406–414 (ETVYPVPEG). The chain crosses the membrane as a helical span at residues 415–435 (ITCGVVTFLSNMFMGVLLFFV). Residues 436-442 (TFYHTEL) lie on the Lumenal side of the membrane. A helical membrane pass occupies residues 443–463 (SWFNWCLPGSCLLSLLLILCF). The Cytoplasmic segment spans residues 464–478 (RESYDRLYLDVVVSV).

This sequence belongs to the major facilitator superfamily. Post-translationally, cleaved in lysosomes by cathepsin L between Leu-214 and Ala-261, generating a N-glycosylated N-terminal and a non-glycosylated C-terminal fragment.

The protein resides in the lysosome membrane. It carries out the reaction pyridoxine(out) + n H(+)(out) = pyridoxine(in) + n H(+)(in). Its function is as follows. Mediates H(+)-dependent pyridoxine transport. This chain is Solute carrier family 49 member 4 (Slc49a4), found in Mus musculus (Mouse).